The chain runs to 458 residues: UDP-N-acetylmuramate--L-alanine ligase (458 aa).

Residue 112-118 (GTHGKTT) participates in ATP binding.

Belongs to the MurCDEF family.

It is found in the cytoplasm. It carries out the reaction UDP-N-acetyl-alpha-D-muramate + L-alanine + ATP = UDP-N-acetyl-alpha-D-muramoyl-L-alanine + ADP + phosphate + H(+). It functions in the pathway cell wall biogenesis; peptidoglycan biosynthesis. Cell wall formation. This is UDP-N-acetylmuramate--L-alanine ligase from Geotalea daltonii (strain DSM 22248 / JCM 15807 / FRC-32) (Geobacter daltonii).